Here is a 571-residue protein sequence, read N- to C-terminus: Sporulation-specific protein 1 (571 aa).

Disordered stretches follow at residues 1–53, 67–133, and 482–501; these read MRSS…EEDV, MTAF…PYRQ, and KEAKNISSSTAEVPSISQPE. Residues 23–37 are compositionally biased toward basic residues; that stretch reads SKQKKPTKFRERMRR. Composition is skewed to polar residues over residues 67 to 86, 95 to 121, and 486 to 499; these read MTAFNNNDNGEVQDVTNNFF, PVQSSVKTFLTGNNDEDSNFQQNQNPK, and NISSSTAEVPSISQ. Coiled-coil stretches lie at residues 469–486 and 542–566; these read DQLVELLAQEKEEKEAKN and ESASEESKVLAAALNDAKQNLDENV.

As to quaternary structure, interacts directly with ADY3. Probable component of a spindle pole body (SPB) complex composed of ADY3, SSP1, DON1, MPC54, SPO21/MPC70, NUD1 and CNM67. Post-translationally, phosphorylated.

The protein resides in the prospore membrane. In terms of biological role, involved in the pathway that organizes the shaping and sizing of the prospore membrane (PSM) during sporulation. May be required for the formation of ADY3 and DON1-containing protein coats at the leading edge of the PSMs during meiosis II. This is Sporulation-specific protein 1 (SSP1) from Saccharomyces cerevisiae (strain ATCC 204508 / S288c) (Baker's yeast).